The following is a 575-amino-acid chain: Acyloxyacyl hydrolase (575 aa).

An N-terminal signal peptide occupies residues 1 to 25 (MKSPWRILVVSPLLLLPLHSSTSRA). Positions 26-34 (HDNQPGTIR) are excised as a propeptide. Positions 36–117 (DHYTCVGCVL…HTLEFCKQEP (82 aa)) constitute a Saposin B-type domain. The tract at residues 37-69 (HYTCVGCVLVVSVIEQLAQVHNSTVQASMERLC) is important for enzyme activity, localization to cytoplasmic vesicles, and protein stability. Intrachain disulfides connect C40/C113, C43/C107, C69/C82, C122/C453, C159/C168, C205/C229, C248/C328, and C375/C459. N58 carries N-linked (GlcNAc...) asparagine glycosylation. Positions 172 to 176 (KLAIK) are lipopolysaccharide binding. Ca(2+) is bound by residues D183, D185, D187, Y189, D204, N206, D207, D209, V212, D222, D226, N228, N230, I232, and E244. N206 carries N-linked (GlcNAc...) asparagine glycosylation. S262 is a catalytic residue. N-linked (GlcNAc...) asparagine glycosylation is present at N466.

As to quaternary structure, heterodimer of the large and small subunits; disulfide-linked. Requires Ca(2+) as cofactor. In terms of processing, cleaved into a large and a small subunit. Post-translationally, the small subunit is N-glycosylated.

It localises to the secreted. Its subcellular location is the cytoplasmic vesicle. It carries out the reaction a 3-(acyloxy)acyl derivative of bacterial toxin + H2O = a 3-hydroxyacyl derivative of bacterial toxin + a fatty acid + H(+). Functionally, removes the secondary (acyloxyacyl-linked) fatty acyl chains from the lipid A region of bacterial lipopolysaccharides (LPS). By breaking down LPS, terminates the host response to bacterial infection and prevents prolonged and damaging inflammatory responses. In peritoneal macrophages, seems to be important for recovery from a state of immune tolerance following infection by Gram-negative bacteria. This Oryctolagus cuniculus (Rabbit) protein is Acyloxyacyl hydrolase.